A 313-amino-acid chain; its full sequence is Methionyl-tRNA formyltransferase (313 aa).

109-112 (SLLP) contributes to the (6S)-5,6,7,8-tetrahydrofolate binding site.

This sequence belongs to the Fmt family.

The enzyme catalyses L-methionyl-tRNA(fMet) + (6R)-10-formyltetrahydrofolate = N-formyl-L-methionyl-tRNA(fMet) + (6S)-5,6,7,8-tetrahydrofolate + H(+). Functionally, attaches a formyl group to the free amino group of methionyl-tRNA(fMet). The formyl group appears to play a dual role in the initiator identity of N-formylmethionyl-tRNA by promoting its recognition by IF2 and preventing the misappropriation of this tRNA by the elongation apparatus. In Thermotoga sp. (strain RQ2), this protein is Methionyl-tRNA formyltransferase.